Reading from the N-terminus, the 968-residue chain is MPFSLGQRWISDTESELGLGTVVGVEGRMVTVLFPATGENRLFSRTEAPLTRVIYNPGDTVESHEEWKLTVTEVEEKDSLIIYHGTHSETGEQVSLRETLLNHNIRFNKPQDRLFAGQIDRLDRFNVRYQCQLLRNKLATSDLLGLQGPRVGLIPHQQWIAHEVGQRFAPRVLLADEVGLGKTIEAGLIIHQQLLTGRAERILVIVPDTLRHQWLVEMLRRFNLRFSVFDEDRCVEAYADHDNPFYTEQLVICSLDLLRKKRRLDQALDADWDLMVVDEAHHLEWSEEAPSRAYQIVEALSEEIPGVLLLTATPDQLGHQSHFARLRLLDPDRFYDYEAFLKEEDSYKDVATAADALASGEILSDESIAGLTQLLAEKDISASITLIQDDAADADSRFQARDELLQDLLDRHGTGRVLYRNSRASVKGFPVRNLHVHPQKMPEQYVTAYRVSSMMNKHLDTNAKVRQVLSPEKIYQDFDSGSAAWWKFDPRVDWLIDFLKNNRSKKVLIIASQAETALSLEEALRTREGIQATVFHEGMSIIERDKAGAYFAQESGGAQALICSEIGSEGRNFQFASNLVLFDLPLNPDLLEQRIGRLDRIGQKNDVEIHLPFLANTAQERLMQWYHQGLNAFECTCPSGHILFNEFSGELLESLLNNDEAVLESLLDGTKARYQELKVAMEQGRDKLLEINSHGGERANQLVKTLADKDEDTQLIGSVIRLWDIIGVEQEDSGENAIVLHPSEHMMFPTYPGLPEDGITVTFDREMALSRDDIALITQEHPLVQTGLDLITSSETGTTSVAVLKNKALPAGTIFLELIYLADASAPKSSQLYRYLPPTPIRVLLDKNGNNLSDNVTYESFNKQLSAVNRHIASKLVNASQAILHPLFAKAESFATTQLETLTECAREKMTSQLSGELERLKALKAVNPNIRDEELSHLSEQMAELNRYLDSSQLQLDAIRLVLVSHA.

A Helicase ATP-binding domain is found at 163–332; that stretch reads EVGQRFAPRV…FARLRLLDPD (170 aa). Position 176–183 (176–183) interacts with ATP; it reads DEVGLGKT. Positions 278–281 match the DEAH box motif; it reads DEAH. Residues 491–678 enclose the Helicase C-terminal domain; sequence RVDWLIDFLK…GTKARYQELK (188 aa).

This sequence belongs to the SNF2/RAD54 helicase family. RapA subfamily. In terms of assembly, interacts with the RNAP. Has a higher affinity for the core RNAP than for the holoenzyme. Its ATPase activity is stimulated by binding to RNAP.

In terms of biological role, transcription regulator that activates transcription by stimulating RNA polymerase (RNAP) recycling in case of stress conditions such as supercoiled DNA or high salt concentrations. Probably acts by releasing the RNAP, when it is trapped or immobilized on tightly supercoiled DNA. Does not activate transcription on linear DNA. Probably not involved in DNA repair. This chain is RNA polymerase-associated protein RapA, found in Shewanella pealeana (strain ATCC 700345 / ANG-SQ1).